The following is a 290-amino-acid chain: ATP synthase gamma chain (290 aa).

This sequence belongs to the ATPase gamma chain family. As to quaternary structure, F-type ATPases have 2 components, CF(1) - the catalytic core - and CF(0) - the membrane proton channel. CF(1) has five subunits: alpha(3), beta(3), gamma(1), delta(1), epsilon(1). CF(0) has three main subunits: a, b and c.

It localises to the cell inner membrane. In terms of biological role, produces ATP from ADP in the presence of a proton gradient across the membrane. The gamma chain is believed to be important in regulating ATPase activity and the flow of protons through the CF(0) complex. In Dictyoglomus thermophilum (strain ATCC 35947 / DSM 3960 / H-6-12), this protein is ATP synthase gamma chain.